A 466-amino-acid polypeptide reads, in one-letter code: ATP synthase subunit beta (466 aa).

148–155 (GGAGVGKT) contacts ATP.

This sequence belongs to the ATPase alpha/beta chains family. In terms of assembly, F-type ATPases have 2 components, CF(1) - the catalytic core - and CF(0) - the membrane proton channel. CF(1) has five subunits: alpha(3), beta(3), gamma(1), delta(1), epsilon(1). CF(0) has three main subunits: a(1), b(2) and c(9-12). The alpha and beta chains form an alternating ring which encloses part of the gamma chain. CF(1) is attached to CF(0) by a central stalk formed by the gamma and epsilon chains, while a peripheral stalk is formed by the delta and b chains.

Its subcellular location is the cell inner membrane. The enzyme catalyses ATP + H2O + 4 H(+)(in) = ADP + phosphate + 5 H(+)(out). Functionally, produces ATP from ADP in the presence of a proton gradient across the membrane. The catalytic sites are hosted primarily by the beta subunits. This chain is ATP synthase subunit beta, found in Herminiimonas arsenicoxydans.